The chain runs to 126 residues: Protein Wnt-1 (126 aa).

Residue S1 is the site of O-palmitoleoyl serine; by PORCN attachment. C92 and C107 are oxidised to a cystine. 2 N-linked (GlcNAc...) asparagine glycosylation sites follow: N93 and N94.

Belongs to the Wnt family. Post-translationally, palmitoleoylation is required for efficient binding to frizzled receptors. Palmitoleoylation is necessary for proper trafficking to cell surface. Depalmitoleoylated by NOTUM, leading to inhibit Wnt signaling pathway.

Its subcellular location is the secreted. The protein localises to the extracellular space. It is found in the extracellular matrix. In terms of biological role, ligand for members of the frizzled family of seven transmembrane receptors. Probable developmental protein. This is Protein Wnt-1 (WNT-1) from Alopias vulpinus (Common thresher shark).